The primary structure comprises 645 residues: 1,4-alpha-glucan branching enzyme GlgB (645 aa).

D309 acts as the Nucleophile in catalysis. E352 acts as the Proton donor in catalysis. Positions 619 to 645 are disordered; that stretch reads VKTRKGSKKQDGSKTKVRSNVTSRGKR. Over residues 636-645 the composition is skewed to polar residues; the sequence is RSNVTSRGKR.

The protein belongs to the glycosyl hydrolase 13 family. GlgB subfamily. Monomer.

The enzyme catalyses Transfers a segment of a (1-&gt;4)-alpha-D-glucan chain to a primary hydroxy group in a similar glucan chain.. The protein operates within glycan biosynthesis; glycogen biosynthesis. In terms of biological role, catalyzes the formation of the alpha-1,6-glucosidic linkages in glycogen by scission of a 1,4-alpha-linked oligosaccharide from growing alpha-1,4-glucan chains and the subsequent attachment of the oligosaccharide to the alpha-1,6 position. This chain is 1,4-alpha-glucan branching enzyme GlgB, found in Bacillus cereus (strain G9842).